A 120-amino-acid chain; its full sequence is MKRLLSLLTGVLVMTGLLMALIFPQSAYANVSDEKLGDRGEKVDLNNSSVRAFRQFPGMFPTIAGKIVVGGPYSSVSDASSVLDASQKSVFDKYKDNFTVTDQEIAVNEGFDRINDGQYR.

An N-terminal signal peptide occupies residues 1–29 (MKRLLSLLTGVLVMTGLLMALIFPQSAYA).

The protein belongs to the PsbU family. PSII is composed of 1 copy each of membrane proteins PsbA, PsbB, PsbC, PsbD, PsbE, PsbF, PsbH, PsbI, PsbJ, PsbK, PsbL, PsbM, PsbT, PsbX, PsbY, Psb30/Ycf12, peripheral proteins PsbO, CyanoQ (PsbQ), PsbU, PsbV and a large number of cofactors. It forms dimeric complexes.

It localises to the cellular thylakoid membrane. Its function is as follows. One of the extrinsic, lumenal subunits of photosystem II (PSII). PSII is a light-driven water plastoquinone oxidoreductase, using light energy to abstract electrons from H(2)O, generating a proton gradient subsequently used for ATP formation. The extrinsic proteins stabilize the structure of photosystem II oxygen-evolving complex (OEC), the ion environment of oxygen evolution and protect the OEC against heat-induced inactivation. This chain is Photosystem II extrinsic protein U, found in Prochlorococcus marinus (strain MIT 9303).